The chain runs to 904 residues: Protein translocase subunit SecA (904 aa).

Residues Gln-89, 107–111 (GEGKT), and Asp-502 each bind ATP. 4 residues coordinate Zn(2+): Cys-888, Cys-890, Cys-899, and His-900.

It belongs to the SecA family. Monomer and homodimer. Part of the essential Sec protein translocation apparatus which comprises SecA, SecYEG and auxiliary proteins SecDF-YajC and YidC. Zn(2+) serves as cofactor.

The protein localises to the cell inner membrane. It localises to the cytoplasm. It catalyses the reaction ATP + H2O + cellular proteinSide 1 = ADP + phosphate + cellular proteinSide 2.. Part of the Sec protein translocase complex. Interacts with the SecYEG preprotein conducting channel. Has a central role in coupling the hydrolysis of ATP to the transfer of proteins into and across the cell membrane, serving both as a receptor for the preprotein-SecB complex and as an ATP-driven molecular motor driving the stepwise translocation of polypeptide chains across the membrane. The polypeptide is Protein translocase subunit SecA (Roseobacter denitrificans (strain ATCC 33942 / OCh 114) (Erythrobacter sp. (strain OCh 114))).